The chain runs to 450 residues: Probable ECA polymerase (450 aa).

11 consecutive transmembrane segments (helical) span residues 6 to 26, 37 to 57, 63 to 83, 118 to 138, 155 to 175, 181 to 201, 207 to 227, 228 to 248, 341 to 361, 378 to 398, and 410 to 430; these read FSGL…LTWF, VFFS…TSVL, VGVA…CFYA, VILM…NGFL, GVAL…VYFL, AWLF…MIVG, IIIA…ISLW, MLAA…LKRY, LVVM…GLII, YKAA…IVLA, and VFFI…YWLF.

The protein belongs to the WzyE family. In terms of assembly, probably part of a complex composed of WzxE, WzyE and WzzE.

It localises to the cell inner membrane. Its pathway is bacterial outer membrane biogenesis; enterobacterial common antigen biosynthesis. Its function is as follows. Probably involved in the polymerization of enterobacterial common antigen (ECA) trisaccharide repeat units. The polypeptide is Probable ECA polymerase (Escherichia coli O139:H28 (strain E24377A / ETEC)).